We begin with the raw amino-acid sequence, 193 residues long: Ion-translocating oxidoreductase complex subunit A (193 aa).

6 helical membrane-spanning segments follow: residues 5 to 25 (LLLFVGTVLVNNFVLVKFLGL), 39 to 59 (MGMGLATTFVMTLASICAWLI), 63 to 83 (ILIPLNLIYLRTLAFILVIAV), 102 to 122 (LLGIFLPLITTNCAVLGVALL), 134 to 154 (ALYGFSAAVGFSLVMVLFAAI), and 171 to 191 (AIALITAGLMSLAFMGFSGLV).

Belongs to the NqrDE/RnfAE family. In terms of assembly, the complex is composed of six subunits: RsxA, RsxB, RsxC, RsxD, RsxE and RsxG.

Its subcellular location is the cell inner membrane. Functionally, part of a membrane-bound complex that couples electron transfer with translocation of ions across the membrane. Required to maintain the reduced state of SoxR. This Shigella boydii serotype 18 (strain CDC 3083-94 / BS512) protein is Ion-translocating oxidoreductase complex subunit A.